A 92-amino-acid polypeptide reads, in one-letter code: Protein S100-A12 (92 aa).

EF-hand domains lie at 13-48 and 49-84; these read NIFHQYSVRLGHYDTLIKRELKQLITKELPNTLKNT and KDQGTIDKIFQNLDANQDEQVSFKEFVVLVTDVLIT. Histidine 16 is a binding site for Cu cation. Histidine 16 lines the Zn(2+) pocket. Ca(2+) contacts are provided by serine 19 and histidine 24. A Cu cation-binding site is contributed by aspartate 26. Aspartate 26 serves as a coordination point for Zn(2+). Ca(2+) is bound by residues threonine 27 and glutamate 32. A hinge domain region spans residues 38–53; sequence TKELPNTLKNTKDQGT. Residues aspartate 62, asparagine 64, aspartate 66, glutamine 68, and glutamate 73 each coordinate Ca(2+). 2 residues coordinate Cu cation: histidine 86 and histidine 90. Residues histidine 86 and histidine 90 each coordinate Zn(2+).

It belongs to the S-100 family. In terms of assembly, homodimer. Homooligomer (tetramer or hexamer) in the presence of calcium, zinc and copper ions. Interacts with AGER and both calcium and zinc are essential for the interaction. Interacts with CACYBP in a calcium-dependent manner. In terms of tissue distribution, found essentially in granulocytes with small amounts found in lymphocytes.

The protein resides in the secreted. It is found in the cytoplasm. It localises to the cytoskeleton. Its subcellular location is the cell membrane. In terms of biological role, S100A12 is a calcium-, zinc- and copper-binding protein which plays a prominent role in the regulation of inflammatory processes and immune response. Its pro-inflammatory activity involves recruitment of leukocytes, promotion of cytokine and chemokine production, and regulation of leukocyte adhesion and migration. Acts as an alarmin or a danger associated molecular pattern (DAMP) molecule and stimulates innate immune cells via binding to receptor for advanced glycation endproducts (AGER). Binding to AGER activates the MAP-kinase and NF-kappa-B signaling pathways leading to production of pro-inflammatory cytokines and up-regulation of cell adhesion molecules ICAM1 and VCAM1. Acts as a monocyte and mast cell chemoattractant. Can stimulate mast cell degranulation and activation which generates chemokines, histamine and cytokines inducing further leukocyte recruitment to the sites of inflammation. Can inhibit the activity of matrix metalloproteinases; MMP2, MMP3 and MMP9 by chelating Zn(2+) from their active sites. The sequence is that of Protein S100-A12 (S100A12) from Sus scrofa (Pig).